The following is a 518-amino-acid chain: 2-isopropylmalate synthase (518 aa).

Residues 4 to 266 (INFFDTTLRD…ESTIQLNEIK (263 aa)) form the Pyruvate carboxyltransferase domain. Positions 13, 201, 203, and 237 each coordinate Mn(2+). A regulatory domain region spans residues 391 to 518 (DFISLQVHYG…GLSKQAAVGS (128 aa)).

This sequence belongs to the alpha-IPM synthase/homocitrate synthase family. LeuA type 1 subfamily. Homodimer. Mn(2+) serves as cofactor.

The protein resides in the cytoplasm. It carries out the reaction 3-methyl-2-oxobutanoate + acetyl-CoA + H2O = (2S)-2-isopropylmalate + CoA + H(+). It participates in amino-acid biosynthesis; L-leucine biosynthesis; L-leucine from 3-methyl-2-oxobutanoate: step 1/4. Catalyzes the condensation of the acetyl group of acetyl-CoA with 3-methyl-2-oxobutanoate (2-ketoisovalerate) to form 3-carboxy-3-hydroxy-4-methylpentanoate (2-isopropylmalate). This chain is 2-isopropylmalate synthase, found in Bacillus licheniformis (strain ATCC 14580 / DSM 13 / JCM 2505 / CCUG 7422 / NBRC 12200 / NCIMB 9375 / NCTC 10341 / NRRL NRS-1264 / Gibson 46).